The chain runs to 834 residues: MPRYPFRRFGFGALRRLLYLWVRSETINQSAFTLKIDRSKPVLYVLQQPSVSDLAVVDTECRKAGLPRPVMPVAVGDAIEPAAFFYLTPEPDWLGRQDKRGASPTLVRMLAAVGQNGLDDAQIIPVSVFWGQSPDSESSPWKLLFADNWAVTGRLRKLARILILGRKTRVQFSAPIHLRELVEQGKGHERTLRMVNRILRVHFRNLKTAVIGPDLSHRRNLVKGLLRAPLVRQAISEECESERISQEKAEGIALRYANEIASDFSYPVIRFLEVILSWFWNKLYEGVKVNHIERVQDVAQGNEIVYVPCHRSHIDYLLLSYLLFRNGLTPPHIAAGINLNMPVIGSILRRGGAFFMRRSFKGNQLYTAVFNEYLHTLFSRGFSTEYFVEGGRSRTGRMLHPRTGMLAITLRSFLRDSRRPIVFVPVYIGYERVLEGRTYLGELRGATKKKESIFDLFKVVGALKQRFGQVWVNFGEPIHLDQFLDRHQPDWQDQDLGPEYRPDWLPQTTNLLAKDVARHLNDAAAINPVNLVALALLSTSRQALDESALARILDLYLALLRKVPYSPSATLPDGDGQALIEYVKSMNLLAEQKDALGRILYLDEQNAVLATYYRNNVLHVFALPALIASFFQSNSRISREQLLRFARALYPYLQAELFIRWSLDELDAVIDQWLAALVEQDLLRQENDTFIRPAPSSRQYVLLILLARSVTQTLQRFYMAIALLLNAGQNALTAEELENLCTVMAQRLSILHGLNAPEFFDKSLFRHFIQTLLDLRVLRKDEAGKLSYHELLGELAEGAAKRVLPAEIRLSIRQVALERPAEEAAAESNDAAAN.

The short motif at 309–314 is the HXXXXD motif element; sequence CHRSHI.

Belongs to the GPAT/DAPAT family.

The protein localises to the cell inner membrane. It catalyses the reaction sn-glycerol 3-phosphate + an acyl-CoA = a 1-acyl-sn-glycero-3-phosphate + CoA. Its pathway is phospholipid metabolism; CDP-diacylglycerol biosynthesis; CDP-diacylglycerol from sn-glycerol 3-phosphate: step 1/3. The protein is Glycerol-3-phosphate acyltransferase of Pseudomonas aeruginosa (strain LESB58).